Here is a 371-residue protein sequence, read N- to C-terminus: NADH-ubiquinone oxidoreductase chain 1 (371 aa).

The next 10 helical transmembrane spans lie at 7 to 27 (IISI…VAYV), 44 to 64 (PNAV…KLLL), 77 to 97 (LFFL…AVIP), 109 to 129 (LGIL…LLAG), 153 to 173 (LVLS…NLGV), 180 to 200 (AVLF…GSIA), 226 to 246 (AVVF…MCIL), 263 to 283 (VFNI…NWMV), 302 to 322 (GWLY…IFIL), and 338 to 358 (FCWT…PCIL).

The protein belongs to the complex I subunit 1 family.

It localises to the mitochondrion inner membrane. The catalysed reaction is a ubiquinone + NADH + 5 H(+)(in) = a ubiquinol + NAD(+) + 4 H(+)(out). Core subunit of the mitochondrial membrane respiratory chain NADH dehydrogenase (Complex I) that is believed to belong to the minimal assembly required for catalysis. Complex I functions in the transfer of electrons from NADH to the respiratory chain. The immediate electron acceptor for the enzyme is believed to be ubiquinone. The polypeptide is NADH-ubiquinone oxidoreductase chain 1 (ndh-1) (Neurospora crassa (strain ATCC 24698 / 74-OR23-1A / CBS 708.71 / DSM 1257 / FGSC 987)).